The following is a 454-amino-acid chain: Toluate 1,2-dioxygenase subunit alpha (454 aa).

In terms of domain architecture, Rieske spans 51–148; the sequence is IYLAHESQIP…SFDCDGSHDL (98 aa). The [2Fe-2S] cluster site is built by Cys92, His94, Cys112, and His115. The Fe cation site is built by His221 and His226.

This sequence belongs to the bacterial ring-hydroxylating dioxygenase alpha subunit family. As to quaternary structure, this dioxygenase system consists of three proteins: the two subunits of the hydroxylase component (XylX and XylY), and an electron transfer component (XylZ). [2Fe-2S] cluster is required as a cofactor. Fe cation serves as cofactor.

It functions in the pathway xenobiotic degradation; toluene degradation. This is Toluate 1,2-dioxygenase subunit alpha (xylX) from Pseudomonas putida (Arthrobacter siderocapsulatus).